Consider the following 239-residue polypeptide: Sugar fermentation stimulation protein homolog (239 aa).

The protein belongs to the SfsA family.

This Mannheimia succiniciproducens (strain KCTC 0769BP / MBEL55E) protein is Sugar fermentation stimulation protein homolog.